The primary structure comprises 263 residues: Chymotrypsinogen B2 (263 aa).

The signal sequence occupies residues 1-18 (MAFLWLLSCWALLGTTFG). 5 cysteine pairs are disulfide-bonded: Cys19–Cys140, Cys60–Cys76, Cys154–Cys219, Cys186–Cys200, and Cys209–Cys238. In terms of domain architecture, Peptidase S1 spans 34 to 261 (IVNGEDAVPG…LIPWVQKILA (228 aa)). Active-site charge relay system residues include His75 and Asp120. Ser213 (charge relay system) is an active-site residue.

The protein belongs to the peptidase S1 family.

The protein resides in the secreted. The protein localises to the extracellular space. The enzyme catalyses Preferential cleavage: Tyr-|-Xaa, Trp-|-Xaa, Phe-|-Xaa, Leu-|-Xaa.. The protein is Chymotrypsinogen B2 (CTRB2) of Homo sapiens (Human).